Reading from the N-terminus, the 175-residue chain is Co-chaperone protein HscB homolog (175 aa).

The 73-residue stretch at 7 to 79 folds into the J domain; sequence SHFDLFHLPA…LQRASYLLSL (73 aa).

It belongs to the HscB family. Interacts with HscA and stimulates its ATPase activity.

Functionally, co-chaperone involved in the maturation of iron-sulfur cluster-containing proteins. Seems to help targeting proteins to be folded toward HscA. The protein is Co-chaperone protein HscB homolog of Burkholderia vietnamiensis (strain G4 / LMG 22486) (Burkholderia cepacia (strain R1808)).